The following is a 158-amino-acid chain: Peptide methionine sulfoxide reductase MsrA (158 aa).

Cys-10 is an active-site residue.

The protein belongs to the MsrA Met sulfoxide reductase family.

It carries out the reaction L-methionyl-[protein] + [thioredoxin]-disulfide + H2O = L-methionyl-(S)-S-oxide-[protein] + [thioredoxin]-dithiol. The catalysed reaction is [thioredoxin]-disulfide + L-methionine + H2O = L-methionine (S)-S-oxide + [thioredoxin]-dithiol. Its function is as follows. Has an important function as a repair enzyme for proteins that have been inactivated by oxidation. Catalyzes the reversible oxidation-reduction of methionine sulfoxide in proteins to methionine. This is Peptide methionine sulfoxide reductase MsrA from Alkaliphilus metalliredigens (strain QYMF).